Consider the following 325-residue polypeptide: MSIRVGIVGISGFGGGEAMRLVASHPSFELIYAAGEGSAGSRLVDRFPGVPAKLADLVIEKWDPVTLPKLDLLFASLPTGASAEALARVPEDVRIVDIGGDHRYVEGWAYGLADVWPAEIEGRIRVANPGCFPAATLSALAPLLAERLIEPDNIVIDAKTGISGAGRGGADSKFGYAETNETVVPYGLLKHVHMPEIAKTIERLSGGSAAGLVFTPHLVPMTRGVLATMYCRGRASTGECLDAARRFYAGRAFVRVTDKPPQTKWATGSNLAFVSYAADPERNLVIAMGVVDNLGKGAAGQAVQNANLICGLPETAGLDGLPVWP.

The active site involves C131.

This sequence belongs to the NAGSA dehydrogenase family. Type 1 subfamily.

Its subcellular location is the cytoplasm. The catalysed reaction is N-acetyl-L-glutamate 5-semialdehyde + phosphate + NADP(+) = N-acetyl-L-glutamyl 5-phosphate + NADPH + H(+). The protein operates within amino-acid biosynthesis; L-arginine biosynthesis; N(2)-acetyl-L-ornithine from L-glutamate: step 3/4. Functionally, catalyzes the NADPH-dependent reduction of N-acetyl-5-glutamyl phosphate to yield N-acetyl-L-glutamate 5-semialdehyde. The protein is N-acetyl-gamma-glutamyl-phosphate reductase of Methylobacterium sp. (strain 4-46).